The sequence spans 394 residues: Ribose-phosphate pyrophosphokinase 5, chloroplastic (394 aa).

The N-terminal 33 residues, methionine 1 to lysine 33, are a transit peptide targeting the chloroplast. Positions 202, 204, 213, and 217 each coordinate Mg(2+). The interval glycine 288–threonine 303 is binding of phosphoribosylpyrophosphate.

Belongs to the ribose-phosphate pyrophosphokinase family.

The protein resides in the plastid. It is found in the chloroplast. It catalyses the reaction D-ribose 5-phosphate + ATP = 5-phospho-alpha-D-ribose 1-diphosphate + AMP + H(+). The protein is Ribose-phosphate pyrophosphokinase 5, chloroplastic (PRS5) of Arabidopsis thaliana (Mouse-ear cress).